Consider the following 1372-residue polypeptide: DNA-directed RNA polymerase subunit beta' (1372 aa).

Residues Cys-69, Cys-71, Cys-84, and Cys-87 each coordinate Zn(2+). Positions 460, 462, and 464 each coordinate Mg(2+). Cys-808, Cys-882, Cys-889, and Cys-892 together coordinate Zn(2+).

It belongs to the RNA polymerase beta' chain family. The RNAP catalytic core consists of 2 alpha, 1 beta, 1 beta' and 1 omega subunit. When a sigma factor is associated with the core the holoenzyme is formed, which can initiate transcription. It depends on Mg(2+) as a cofactor. Zn(2+) is required as a cofactor.

The enzyme catalyses RNA(n) + a ribonucleoside 5'-triphosphate = RNA(n+1) + diphosphate. Functionally, DNA-dependent RNA polymerase catalyzes the transcription of DNA into RNA using the four ribonucleoside triphosphates as substrates. The sequence is that of DNA-directed RNA polymerase subunit beta' from Rickettsia rickettsii (strain Iowa).